Consider the following 878-residue polypeptide: Indoleacetate decarboxylase (878 aa).

Residues 42 to 750 (DRTKRMKERF…VTGATPDGRL (709 aa)) form the PFL domain. C500 acts as the Cysteine radical intermediate in catalysis. E502 acts as the Proton acceptor in catalysis. The 121-residue stretch at 758–878 (GILSASPGTD…VIARTEYDAL (121 aa)) folds into the Glycine radical domain. At G853 the chain carries Glycine radical.

It belongs to the glycyl radical enzyme (GRE) family. As to quaternary structure, homodimer (predominantly) and monomer. In terms of processing, requires the activating protein OsIADAE to generate the key active site glycyl radical on Gly-853 that is involved in catalysis.

The enzyme catalyses (indol-3-yl)acetate + H(+) = skatole + CO2. It functions in the pathway amino-acid degradation. Its function is as follows. Glycyl radical enzyme that catalyzes the terminal step of tryptophan fermentation, the decarboxylation of indoleacetate to form skatole, a malodorous compound that contributes to the characteristic smell of animal feces. No activity is detected with phenylacetate or p-hydroxyphenylacetate as substrates, indicating high substrate specificity. The chain is Indoleacetate decarboxylase from Tractidigestivibacter scatoligenes (Olsenella scatoligenes).